We begin with the raw amino-acid sequence, 345 residues long: Homeobox-leucine zipper protein HOX16 (345 aa).

Positions 76–135 (LPEKKRRLTPEQVHLLERSFEEENKLEPERKTELARKLGLQPRQVAVWFQNRRARWKTKQ) form a DNA-binding region, homeobox. The tract at residues 134–178 (KQLERDFDRLKASFDALRADHDALLQDNHRLHSQVMSLTEKLQEK) is leucine-zipper. The tract at residues 220–241 (FEEQQEQQVKAEDRLSTGSGGS) is disordered.

The protein belongs to the HD-ZIP homeobox family. Class I subfamily. Expressed in seedlings, stems, leaf sheaths and blades and panicles.

It is found in the nucleus. Its function is as follows. Probable transcription factor. The sequence is that of Homeobox-leucine zipper protein HOX16 (HOX16) from Oryza sativa subsp. indica (Rice).